We begin with the raw amino-acid sequence, 421 residues long: MVDLKRLRQEPEVFHRAIREKGVALDLEALLALDQEVQELKKRLQEVQTERNQVAKRVPKAPPEEKEALIARGRALGEEAKRLEEALREKEAQLEALLLQVPLPPWPGAPVGGEEANREIKRVGSPPEFSFPPLDHVALMEKNGWWEPRISQVSGSRSYALKGDLALYELALLRFAMDFMARRGFLPMTLPSYAREKAFLGTGHFPAYRDQVWAIAETDLYLTGTAEVVLNALHSGEILPYEALPLRYAGYAPAFRSEAGSFGKDVRGLMRVHQFHKVEQYVLTEASLEASDRAFQELLENAEEILRLLELPYRLVEVATGDMGPGKWRQVDVEVYLPSEGRYRETHSCSALLDWQARRANLRYRDPEGRVRYAYTLNNTALATPRILAMLLENHQLQDGRVRVPKALVPYMGKEVLEPCG.

L-serine is bound at residue 225 to 227 (TAE). Residues 256–258 (RSE) and V272 contribute to the ATP site. E279 is an L-serine binding site. 345–348 (ETHS) provides a ligand contact to ATP. L-serine is bound at residue T380.

The protein belongs to the class-II aminoacyl-tRNA synthetase family. Type-1 seryl-tRNA synthetase subfamily. In terms of assembly, homodimer. The tRNA molecule binds across the dimer.

It is found in the cytoplasm. It catalyses the reaction tRNA(Ser) + L-serine + ATP = L-seryl-tRNA(Ser) + AMP + diphosphate + H(+). The enzyme catalyses tRNA(Sec) + L-serine + ATP = L-seryl-tRNA(Sec) + AMP + diphosphate + H(+). It participates in aminoacyl-tRNA biosynthesis; selenocysteinyl-tRNA(Sec) biosynthesis; L-seryl-tRNA(Sec) from L-serine and tRNA(Sec): step 1/1. Its function is as follows. Catalyzes the attachment of serine to tRNA(Ser). Is also able to aminoacylate tRNA(Sec) with serine, to form the misacylated tRNA L-seryl-tRNA(Sec), which will be further converted into selenocysteinyl-tRNA(Sec). This is Serine--tRNA ligase from Thermus thermophilus (strain ATCC 27634 / DSM 579 / HB8).